The following is a 345-amino-acid chain: Uroporphyrinogen decarboxylase (345 aa).

Residues 28–32, aspartate 77, tyrosine 152, serine 207, and histidine 321 contribute to the substrate site; that span reads RQAGR.

Belongs to the uroporphyrinogen decarboxylase family. Homodimer.

The protein resides in the cytoplasm. It carries out the reaction uroporphyrinogen III + 4 H(+) = coproporphyrinogen III + 4 CO2. Its pathway is porphyrin-containing compound metabolism; protoporphyrin-IX biosynthesis; coproporphyrinogen-III from 5-aminolevulinate: step 4/4. Functionally, catalyzes the decarboxylation of four acetate groups of uroporphyrinogen-III to yield coproporphyrinogen-III. The protein is Uroporphyrinogen decarboxylase of Arthrobacter sp. (strain FB24).